The primary structure comprises 834 residues: Periplasmic nitrate reductase (834 aa).

Residues 1–32 (MTEPKIDRRQLLKLEAAAIAAAAAGMPTVARA) constitute a signal peptide (tat-type signal). The 4Fe-4S Mo/W bis-MGD-type domain maps to 44 to 100 (LKWDKAACRFCGTGCSVMVATKDNRVVATHGDIKAEVNRGLNCVKGYFLSKIMYGHD). Residues Cys51, Cys54, Cys58, and Cys86 each coordinate [4Fe-4S] cluster. Mo-bis(molybdopterin guanine dinucleotide)-binding positions include Lys88, Gln155, Asn180, Cys184, 217 to 224 (WGSNMAEM), 248 to 252 (STFEH), 267 to 269 (QTD), Met378, Gln382, Asn488, 514 to 515 (SD), Lys537, Asp564, and 724 to 733 (TGRVVEHWHS). Position 800 (Trp800) interacts with substrate. The Mo-bis(molybdopterin guanine dinucleotide) site is built by Asn808 and Lys825.

Belongs to the prokaryotic molybdopterin-containing oxidoreductase family. NasA/NapA/NarB subfamily. In terms of assembly, component of the periplasmic nitrate reductase NapAB complex composed of NapA and NapB. [4Fe-4S] cluster is required as a cofactor. The cofactor is Mo-bis(molybdopterin guanine dinucleotide). In terms of processing, predicted to be exported by the Tat system. The position of the signal peptide cleavage has not been experimentally proven.

The protein resides in the periplasm. It carries out the reaction 2 Fe(II)-[cytochrome] + nitrate + 2 H(+) = 2 Fe(III)-[cytochrome] + nitrite + H2O. Its function is as follows. Catalytic subunit of the periplasmic nitrate reductase complex NapAB. Receives electrons from NapB and catalyzes the reduction of nitrate to nitrite. The polypeptide is Periplasmic nitrate reductase (Bradyrhizobium sp. (strain ORS 278)).